Here is a 393-residue protein sequence, read N- to C-terminus: NAD(P)H-quinone oxidoreductase subunit H, chloroplastic (393 aa).

It belongs to the complex I 49 kDa subunit family. NDH is composed of at least 16 different subunits, 5 of which are encoded in the nucleus.

It is found in the plastid. It localises to the chloroplast thylakoid membrane. The catalysed reaction is a plastoquinone + NADH + (n+1) H(+)(in) = a plastoquinol + NAD(+) + n H(+)(out). It carries out the reaction a plastoquinone + NADPH + (n+1) H(+)(in) = a plastoquinol + NADP(+) + n H(+)(out). In terms of biological role, NDH shuttles electrons from NAD(P)H:plastoquinone, via FMN and iron-sulfur (Fe-S) centers, to quinones in the photosynthetic chain and possibly in a chloroplast respiratory chain. The immediate electron acceptor for the enzyme in this species is believed to be plastoquinone. Couples the redox reaction to proton translocation, and thus conserves the redox energy in a proton gradient. The chain is NAD(P)H-quinone oxidoreductase subunit H, chloroplastic from Populus alba (White poplar).